Consider the following 345-residue polypeptide: Ferrochelatase (345 aa).

His199 and Glu302 together coordinate Fe cation.

The protein belongs to the ferrochelatase family.

Its subcellular location is the cytoplasm. The catalysed reaction is heme b + 2 H(+) = protoporphyrin IX + Fe(2+). The protein operates within porphyrin-containing compound metabolism; protoheme biosynthesis; protoheme from protoporphyrin-IX: step 1/1. Its function is as follows. Catalyzes the ferrous insertion into protoporphyrin IX. This chain is Ferrochelatase, found in Porphyromonas gingivalis (strain ATCC 33277 / DSM 20709 / CIP 103683 / JCM 12257 / NCTC 11834 / 2561).